A 173-amino-acid polypeptide reads, in one-letter code: NADH-ubiquinone oxidoreductase chain 6 (173 aa).

The next 5 helical transmembrane spans lie at 1–21 (MTYIVSLFLLGLVLGLVAVAS), 27–47 (FAALGLVVAAGVGCGVLVGYG), 53–73 (LVLFLIYLGGMLVVFAYSAAL), 86–106 (SVLGYVVVYTVGVMLVAGWFW), and 139–159 (YGGGMLIVCAWVLLLTLFVVL).

This sequence belongs to the complex I subunit 6 family.

The protein localises to the mitochondrion membrane. The catalysed reaction is a ubiquinone + NADH + 5 H(+)(in) = a ubiquinol + NAD(+) + 4 H(+)(out). Its function is as follows. Core subunit of the mitochondrial membrane respiratory chain NADH dehydrogenase (Complex I) that is believed to belong to the minimal assembly required for catalysis. Complex I functions in the transfer of electrons from NADH to the respiratory chain. The immediate electron acceptor for the enzyme is believed to be ubiquinone. This chain is NADH-ubiquinone oxidoreductase chain 6 (MT-ND6), found in Salmo salar (Atlantic salmon).